Consider the following 512-residue polypeptide: Choline-sulfatase (512 aa).

Ca(2+)-binding residues include aspartate 14, glutamine 15, and cysteine 54. Cysteine 54 functions as the Nucleophile in the catalytic mechanism. 3-oxoalanine (Cys) is present on cysteine 54. Histidine 104 is an active-site residue. Positions 296 and 297 each coordinate Ca(2+).

Belongs to the sulfatase family. The cofactor is Ca(2+). The conversion to 3-oxoalanine (also known as C-formylglycine, FGly), of a serine or cysteine residue in prokaryotes and of a cysteine residue in eukaryotes, is critical for catalytic activity.

It carries out the reaction choline sulfate + H2O = choline + sulfate + H(+). It participates in amine and polyamine biosynthesis; choline biosynthesis; choline from choline sulfate: step 1/1. Functionally, converts choline-O-sulfate into choline. This chain is Choline-sulfatase (betC), found in Rhizobium meliloti (strain 1021) (Ensifer meliloti).